Here is a 908-residue protein sequence, read N- to C-terminus: Autophagy-related protein 9 (908 aa).

The Cytoplasmic segment spans residues 1–216 (MADGVIARLM…SGMWCIVVER (216 aa)). The interval 64 to 162 (SRATVDGRIP…IDQELQPPLH (99 aa)) is disordered. The helical transmembrane segment at 217–237 (VLHLIKVAFVAFLLTFLSQCV) threads the bilayer. The Lumenal segment spans residues 238 to 259 (DFKKIPSNQKLSQVLVPQCTRN). The N-linked (GlcNAc...) asparagine glycan is linked to N259. A helical membrane pass occupies residues 260-280 (MSGLWNIGLWLFAFYFMWKSI). Residues 281–433 (QYILDLRRLT…GILSAKLRSR (153 aa)) are Cytoplasmic-facing. The stretch at 434-454 (FIFAGVMILILSPFVAGYLII) is an intramembrane region. Topologically, residues 455–525 (VYFLEYYNEI…KTSMVAKTVS (71 aa)) are cytoplasmic. Residues 526–546 (FIAGSIATVLALISVFDPEMF) traverse the membrane as a helical segment. Residues 547–555 (LGFEITHDR) lie on the Lumenal side of the membrane. Residues 556-576 (TVLFYTAVFGAIWSVARGSVS) traverse the membrane as a helical segment. Residues 577–622 (EDNAVFDPEYALGNVVEYTHYQPEHWKDRWHSADVKAEFEELYKLK) lie on the Cytoplasmic side of the membrane. An intramembrane segment occupies 623–643 (LVIFIEEILSILTTPFVLFFS). Residues 644-908 (LPKSADQIID…HLNRRLGGVR (265 aa)) lie on the Cytoplasmic side of the membrane. Disordered stretches follow at residues 751–779 (AASR…AVMA) and 809–878 (QFRG…DSVV). Gly residues predominate over residues 813–825 (GNQGDGHMMGGGS). Residues 839 to 852 (QTHDDESEDSRAGL) are compositionally biased toward basic and acidic residues.

It belongs to the ATG9 family. As to quaternary structure, homotrimer; forms a homotrimer with a central pore that forms a path between the two membrane leaflets. Phosphorylated by apg-1. Apg-1 phosphorylation is required for preautophagosome elongation.

The protein resides in the preautophagosomal structure membrane. Its subcellular location is the cytoplasmic vesicle membrane. The protein localises to the golgi apparatus membrane. It is found in the endoplasmic reticulum membrane. It catalyses the reaction a 1,2-diacyl-sn-glycero-3-phosphocholine(in) = a 1,2-diacyl-sn-glycero-3-phosphocholine(out). It carries out the reaction a 1,2-diacyl-sn-glycero-3-phospho-L-serine(in) = a 1,2-diacyl-sn-glycero-3-phospho-L-serine(out). The enzyme catalyses a 1,2-diacyl-sn-glycero-3-phosphoethanolamine(in) = a 1,2-diacyl-sn-glycero-3-phosphoethanolamine(out). The catalysed reaction is a 1,2-diacyl-sn-glycero-3-phospho-(1D-myo-inositol-3-phosphate)(in) = a 1,2-diacyl-sn-glycero-3-phospho-(1D-myo-inositol-3-phosphate)(out). Phospholipid scramblase involved in autophagy and cytoplasm to vacuole transport (Cvt) vesicle formation. Cycles between the preautophagosomal structure/phagophore assembly site (PAS) and the cytoplasmic vesicle pool and supplies membrane for the growing autophagosome. Lipid scramblase activity plays a key role in preautophagosomal structure/phagophore assembly by distributing the phospholipids that arrive through atg-2 from the cytoplasmic to the luminal leaflet of the bilayer, thereby driving autophagosomal membrane expansion. Required for mitophagy. Also involved in endoplasmic reticulum-specific autophagic process and is essential for the survival of cells subjected to severe ER stress. Different machineries are required for anterograde trafficking to the PAS during either the Cvt pathway or bulk autophagy and for retrograde trafficking. This Neurospora crassa (strain ATCC 24698 / 74-OR23-1A / CBS 708.71 / DSM 1257 / FGSC 987) protein is Autophagy-related protein 9 (apg-7).